Reading from the N-terminus, the 218-residue chain is uncharacterized protein (218 aa).

5 helical membrane passes run 19 to 39, 92 to 112, 124 to 144, 161 to 181, and 196 to 216; these read VFGFSEFSIIGFITAVIFTII, FDYALFLTLVGIANIGIVSAV, YGLIAMIATLPLFGSAGMILA, LLFEKIIFAAGMAGETGIAPF, and YILMIHLSSLLLIVRTVEILL.

Its subcellular location is the cell membrane. This is an uncharacterized protein from Methanocaldococcus jannaschii (strain ATCC 43067 / DSM 2661 / JAL-1 / JCM 10045 / NBRC 100440) (Methanococcus jannaschii).